The chain runs to 174 residues: Protein FanG (174 aa).

An N-terminal signal peptide occupies residues 1 to 21; that stretch reads MKKLYKAITVICILMSNLQSA. Cysteine 41 and cysteine 75 are joined by a disulfide.

It localises to the fimbrium. Functionally, involved in the biosynthesis of K99 fimbriae. This chain is Protein FanG (fanG), found in Escherichia coli.